The sequence spans 745 residues: Fatty acid oxidation complex subunit alpha (745 aa).

The tract at residues 47-209 (VNTLKAKFAE…KMGLVDDVVP (163 aa)) is enoyl-CoA hydratase. Residues 325–745 (RAIHRVGVLG…LDEAAITAHN (421 aa)) form a 3-hydroxyacyl-CoA dehydrogenase region.

In the N-terminal section; belongs to the enoyl-CoA hydratase/isomerase family. It in the central section; belongs to the 3-hydroxyacyl-CoA dehydrogenase family. In terms of assembly, heterotetramer of two alpha chains (FadJ) and two beta chains (FadI).

The protein resides in the cytoplasm. It carries out the reaction a (3S)-3-hydroxyacyl-CoA = a (2E)-enoyl-CoA + H2O. The enzyme catalyses a 4-saturated-(3S)-3-hydroxyacyl-CoA = a (3E)-enoyl-CoA + H2O. The catalysed reaction is a (3S)-3-hydroxyacyl-CoA + NAD(+) = a 3-oxoacyl-CoA + NADH + H(+). It catalyses the reaction (3S)-3-hydroxybutanoyl-CoA = (3R)-3-hydroxybutanoyl-CoA. It participates in lipid metabolism; fatty acid beta-oxidation. Catalyzes the formation of a hydroxyacyl-CoA by addition of water on enoyl-CoA. Also exhibits 3-hydroxyacyl-CoA epimerase and 3-hydroxyacyl-CoA dehydrogenase activities. This Yersinia enterocolitica serotype O:8 / biotype 1B (strain NCTC 13174 / 8081) protein is Fatty acid oxidation complex subunit alpha.